The following is an 840-amino-acid chain: Probable sulfate permease C869.05c (840 aa).

The next 12 helical transmembrane spans lie at 120 to 140 (WLIN…PQGM), 148 to 168 (LPSE…CFFA), 173 to 193 (VSIG…ANVM), 208 to 228 (LALL…GFII), 230 to 250 (FIPV…ILSG), 278 to 298 (LPDT…LFFT), 315 to 335 (AFFL…TAIS), 410 to 430 (LIAM…PATG), 447 to 467 (IAGI…TDAF), 470 to 490 (IPNA…ILPM), 505 to 525 (CIFF…GIYV), and 527 to 547 (VCLA…SFLG). The STAS domain maps to 578 to 733 (NLEIQSPPPG…CVEVAAPLRD (156 aa)). A Phosphoserine modification is found at Ser-823.

It belongs to the SLC26A/SulP transporter (TC 2.A.53) family.

Its subcellular location is the membrane. Its function is as follows. High affinity uptake of sulfate into the cell. The protein is Probable sulfate permease C869.05c of Schizosaccharomyces pombe (strain 972 / ATCC 24843) (Fission yeast).